We begin with the raw amino-acid sequence, 341 residues long: Protein-glutamate methylesterase/protein-glutamine glutaminase 2 (341 aa).

Residues 7-120 (KTLIVDDSLL…NRDLDSFFSE (114 aa)) enclose the Response regulatory domain. Aspartate 58 carries the 4-aspartylphosphate modification. Positions 155 to 341 (VIAIGASTGG…QALYKLINQL (187 aa)) constitute a CheB-type methylesterase domain. Residues serine 161, histidine 187, and aspartate 283 contribute to the active site.

This sequence belongs to the CheB family. Phosphorylated by CheA. Phosphorylation of the N-terminal regulatory domain activates the methylesterase activity.

It localises to the cytoplasm. The enzyme catalyses [protein]-L-glutamate 5-O-methyl ester + H2O = L-glutamyl-[protein] + methanol + H(+). The catalysed reaction is L-glutaminyl-[protein] + H2O = L-glutamyl-[protein] + NH4(+). Its function is as follows. Involved in chemotaxis. Part of a chemotaxis signal transduction system that modulates chemotaxis in response to various stimuli. Catalyzes the demethylation of specific methylglutamate residues introduced into the chemoreceptors (methyl-accepting chemotaxis proteins or MCP) by CheR. Also mediates the irreversible deamidation of specific glutamine residues to glutamic acid. This chain is Protein-glutamate methylesterase/protein-glutamine glutaminase 2, found in Syntrophomonas wolfei subsp. wolfei (strain DSM 2245B / Goettingen).